Reading from the N-terminus, the 225-residue chain is 3-dehydroquinate dehydratase (225 aa).

3-dehydroquinate-binding positions include 30–32 (EWR) and arginine 62. Histidine 118 functions as the Proton donor/acceptor in the catalytic mechanism. Lysine 143 acts as the Schiff-base intermediate with substrate in catalysis. Residues arginine 186 and glutamine 209 each contribute to the 3-dehydroquinate site.

The protein belongs to the type-I 3-dehydroquinase family. In terms of assembly, homodimer.

It carries out the reaction 3-dehydroquinate = 3-dehydroshikimate + H2O. It participates in metabolic intermediate biosynthesis; chorismate biosynthesis; chorismate from D-erythrose 4-phosphate and phosphoenolpyruvate: step 3/7. Its function is as follows. Involved in the third step of the chorismate pathway, which leads to the biosynthesis of aromatic amino acids. Catalyzes the cis-dehydration of 3-dehydroquinate (DHQ) and introduces the first double bond of the aromatic ring to yield 3-dehydroshikimate. This Streptococcus agalactiae serotype Ia (strain ATCC 27591 / A909 / CDC SS700) protein is 3-dehydroquinate dehydratase.